Consider the following 145-residue polypeptide: Aminoglycoside N(6')-acetyltransferase type 1 (145 aa).

Residues 1 to 145 (MNIKPASEAS…KVVYFSKKID (145 aa)) form the N-acetyltransferase domain. Substrate-binding residues include Trp-22, Tyr-65, and Glu-78. Position 80-82 (80-82 (IYV)) interacts with acetyl-CoA. Asp-114 serves as a coordination point for substrate. Asn-119 serves as a coordination point for acetyl-CoA. Glu-135 serves as a coordination point for substrate.

Homodimer.

It catalyses the reaction kanamycin B + acetyl-CoA = N(6')-acetylkanamycin B + CoA + H(+). In terms of biological role, catalyzes the transfer of an acetyl group from acetyl-CoA to the 6'-amino group of aminoglycoside molecules conferring resistance to antibiotics containing the purpurosamine ring including amikacin, kanamycin, tobramycin and netilmicin. The chain is Aminoglycoside N(6')-acetyltransferase type 1 from Acinetobacter haemolyticus.